Consider the following 697-residue polypeptide: Elongation factor G (697 aa).

The tr-type G domain maps to 8-283 (EHIRNIGICA…AVVDFLPSPT (276 aa)). GTP-binding positions include 17-24 (AHIDAGKT), 81-85 (DTPGH), and 135-138 (NKMD).

The protein belongs to the TRAFAC class translation factor GTPase superfamily. Classic translation factor GTPase family. EF-G/EF-2 subfamily.

It localises to the cytoplasm. Its function is as follows. Catalyzes the GTP-dependent ribosomal translocation step during translation elongation. During this step, the ribosome changes from the pre-translocational (PRE) to the post-translocational (POST) state as the newly formed A-site-bound peptidyl-tRNA and P-site-bound deacylated tRNA move to the P and E sites, respectively. Catalyzes the coordinated movement of the two tRNA molecules, the mRNA and conformational changes in the ribosome. In Rickettsia rhipicephali, this protein is Elongation factor G.